A 284-amino-acid chain; its full sequence is Tryptophan 2,3-dioxygenase (284 aa).

Substrate is bound by residues 53–57 (FIVQH), tyrosine 115, and arginine 119. Histidine 242 provides a ligand contact to heme. Threonine 256 is a binding site for substrate.

The protein belongs to the tryptophan 2,3-dioxygenase family. Homotetramer. Heme is required as a cofactor.

It catalyses the reaction L-tryptophan + O2 = N-formyl-L-kynurenine. It participates in amino-acid degradation; L-tryptophan degradation via kynurenine pathway; L-kynurenine from L-tryptophan: step 1/2. Its function is as follows. Heme-dependent dioxygenase that catalyzes the oxidative cleavage of the L-tryptophan (L-Trp) pyrrole ring and converts L-tryptophan to N-formyl-L-kynurenine. Catalyzes the oxidative cleavage of the indole moiety. This is Tryptophan 2,3-dioxygenase from Bordetella pertussis (strain Tohama I / ATCC BAA-589 / NCTC 13251).